A 122-amino-acid chain; its full sequence is Large ribosomal subunit protein uL14 (122 aa).

Belongs to the universal ribosomal protein uL14 family. Part of the 50S ribosomal subunit. Forms a cluster with proteins L3 and L19. In the 70S ribosome, L14 and L19 interact and together make contacts with the 16S rRNA in bridges B5 and B8.

Binds to 23S rRNA. Forms part of two intersubunit bridges in the 70S ribosome. This Macrococcus caseolyticus (strain JCSC5402) (Macrococcoides caseolyticum) protein is Large ribosomal subunit protein uL14.